Here is a 277-residue protein sequence, read N- to C-terminus: E3 ubiquitin-protein ligase CCNB1IP1 (277 aa).

The RING-type; atypical zinc finger occupies 4–51 (CEDMLLCNYRKCRIKLSGYAWVTACSHIFCDQHGSGEFSRSPAICPAC). Residues 127 to 182 (QQIQSKDVELTSMKGEVTSMKKVLEEYKKKFSDISEKLMERNRQYQKLQGLYDSLR) adopt a coiled-coil conformation.

As to quaternary structure, interacts with CCNB1, UBE2L3 and NF2. Post-translationally, ubiquitinated; autoubiquitinated. Phosphorylated by CDK1 on serine or threonine residues (in vitro). Highly expressed in heart. Detected at intermediate levels in liver and kidney, and at low levels in placenta, brain and lung.

It localises to the nucleus. The protein resides in the chromosome. It carries out the reaction S-ubiquitinyl-[E2 ubiquitin-conjugating enzyme]-L-cysteine + [acceptor protein]-L-lysine = [E2 ubiquitin-conjugating enzyme]-L-cysteine + N(6)-ubiquitinyl-[acceptor protein]-L-lysine.. It participates in protein modification; protein ubiquitination. In terms of biological role, ubiquitin E3 ligase that acts as a limiting factor for crossing-over during meiosis: required during zygonema to limit the colocalization of RNF212 with MutS-gamma-associated recombination sites and thereby establish early differentiation of crossover and non-crossover sites. Later, it is directed by MutL-gamma to stably accumulate at designated crossover sites. Probably promotes the dissociation of RNF212 and MutS-gamma to allow the progression of recombination and the implementation of the final steps of crossing over. Modulates cyclin-B levels and participates in the regulation of cell cycle progression through the G2 phase. Overexpression causes delayed entry into mitosis. This is E3 ubiquitin-protein ligase CCNB1IP1 (CCNB1IP1) from Homo sapiens (Human).